A 106-amino-acid chain; its full sequence is uORF protein (106 aa).

The segment covering 1-19 (MDLETRVSGHEKPQRRNPE) has biased composition (basic and acidic residues). The interval 1–31 (MDLETRVSGHEKPQRRNPEDPDCQYAKTRSS) is disordered.

Its subcellular location is the host cytoplasm. The protein resides in the host cytoskeleton. Plays a role in viral replication. The chain is uORF protein from Zika virus (ZIKV).